A 253-amino-acid polypeptide reads, in one-letter code: Acidic 26 kDa endochitinase (253 aa).

The first 24 residues, 1 to 24, serve as a signal peptide directing secretion; it reads MKFNIVSPVALSCLFFLFLTGTLA. Glu92 (proton donor) is an active-site residue. Cysteines 212 and 244 form a disulfide.

This sequence belongs to the glycosyl hydrolase 19 family. Chitinase class II subfamily.

Its subcellular location is the secreted. It localises to the extracellular space. It carries out the reaction Random endo-hydrolysis of N-acetyl-beta-D-glucosaminide (1-&gt;4)-beta-linkages in chitin and chitodextrins.. In terms of biological role, defense against chitin-containing fungal pathogens. In Solanum lycopersicum (Tomato), this protein is Acidic 26 kDa endochitinase (CHI3).